The following is a 234-amino-acid chain: Large ribosomal subunit protein uL1 (234 aa).

Belongs to the universal ribosomal protein uL1 family. Part of the 50S ribosomal subunit.

In terms of biological role, binds directly to 23S rRNA. The L1 stalk is quite mobile in the ribosome, and is involved in E site tRNA release. Functionally, protein L1 is also a translational repressor protein, it controls the translation of the L11 operon by binding to its mRNA. This Prochlorococcus marinus (strain MIT 9211) protein is Large ribosomal subunit protein uL1.